A 197-amino-acid polypeptide reads, in one-letter code: UPF0301 protein A2cp1_4106 (197 aa).

It belongs to the UPF0301 (AlgH) family.

The protein is UPF0301 protein A2cp1_4106 of Anaeromyxobacter dehalogenans (strain 2CP-1 / ATCC BAA-258).